A 214-amino-acid chain; its full sequence is Adenylate kinase (214 aa).

10 to 15 (GAGKGT) provides a ligand contact to ATP. Residues 30-59 (STGDMLRAAIKAGTELGKQAKSVIDAGQLV) form an NMP region. AMP-binding positions include T31, R36, 57-59 (QLV), 85-88 (GFPR), and Q92. The tract at residues 122-159 (GRRAHLPSGRTYHVVYNPPKEEGKDDETGEPLVIREDD) is LID. ATP is bound by residues R123 and 132-133 (TY). R156 and R167 together coordinate AMP. K200 contributes to the ATP binding site.

The protein belongs to the adenylate kinase family. Monomer.

It is found in the cytoplasm. It catalyses the reaction AMP + ATP = 2 ADP. It participates in purine metabolism; AMP biosynthesis via salvage pathway; AMP from ADP: step 1/1. Its function is as follows. Catalyzes the reversible transfer of the terminal phosphate group between ATP and AMP. Plays an important role in cellular energy homeostasis and in adenine nucleotide metabolism. The polypeptide is Adenylate kinase (Aliivibrio fischeri (strain ATCC 700601 / ES114) (Vibrio fischeri)).